Here is a 318-residue protein sequence, read N- to C-terminus: Mitochondrial thiamine pyrophosphate carrier (318 aa).

Solcar repeat units follow at residues asparagine 13–leucine 106, histidine 116–alanine 202, and threonine 214–leucine 309. The next 5 membrane-spanning stretches (helical) occupy residues alanine 19 to isoleucine 39, isoleucine 87 to leucine 107, phenylalanine 122 to leucine 142, valine 173 to phenylalanine 193, and leucine 220 to isoleucine 240. The Substrate recognition motif lies at lysine 241–valine 246. The chain crosses the membrane as a helical span at residues alanine 293–isoleucine 313.

This sequence belongs to the mitochondrial carrier (TC 2.A.29) family.

It localises to the mitochondrion membrane. It catalyses the reaction thiamine phosphate(out) + thiamine diphosphate(in) = thiamine phosphate(in) + thiamine diphosphate(out). Functionally, mitochondrial transporter mediating uptake of thiamine diphosphate into mitochondria. It is not clear if the antiporter activity is affected by the membrane potential or by the proton electrochemical gradient. This is Mitochondrial thiamine pyrophosphate carrier (Slc25a19) from Mus musculus (Mouse).